A 456-amino-acid polypeptide reads, in one-letter code: Bifunctional protein GlmU (456 aa).

Residues 1–229 (MSNSSMSVVI…LSEVEGVNNR (229 aa)) form a pyrophosphorylase region. Residues 11–14 (LAAG), lysine 25, glutamine 76, 81–82 (GT), 103–105 (YGD), glycine 140, glutamate 154, asparagine 169, and asparagine 227 each bind UDP-N-acetyl-alpha-D-glucosamine. Aspartate 105 is a binding site for Mg(2+). Asparagine 227 serves as a coordination point for Mg(2+). The linker stretch occupies residues 230–250 (LQLAALERVYQSEQAEKLLLA). The segment at 251-456 (GVMLLDPARF…QGWQRPIKKK (206 aa)) is N-acetyltransferase. Residues arginine 333 and lysine 351 each contribute to the UDP-N-acetyl-alpha-D-glucosamine site. Catalysis depends on histidine 363, which acts as the Proton acceptor. Residues tyrosine 366 and asparagine 377 each coordinate UDP-N-acetyl-alpha-D-glucosamine. Acetyl-CoA-binding positions include alanine 380, 386-387 (NY), serine 405, alanine 423, and arginine 440.

The protein in the N-terminal section; belongs to the N-acetylglucosamine-1-phosphate uridyltransferase family. This sequence in the C-terminal section; belongs to the transferase hexapeptide repeat family. As to quaternary structure, homotrimer. The cofactor is Mg(2+).

It localises to the cytoplasm. It carries out the reaction alpha-D-glucosamine 1-phosphate + acetyl-CoA = N-acetyl-alpha-D-glucosamine 1-phosphate + CoA + H(+). The catalysed reaction is N-acetyl-alpha-D-glucosamine 1-phosphate + UTP + H(+) = UDP-N-acetyl-alpha-D-glucosamine + diphosphate. Its pathway is nucleotide-sugar biosynthesis; UDP-N-acetyl-alpha-D-glucosamine biosynthesis; N-acetyl-alpha-D-glucosamine 1-phosphate from alpha-D-glucosamine 6-phosphate (route II): step 2/2. It participates in nucleotide-sugar biosynthesis; UDP-N-acetyl-alpha-D-glucosamine biosynthesis; UDP-N-acetyl-alpha-D-glucosamine from N-acetyl-alpha-D-glucosamine 1-phosphate: step 1/1. The protein operates within bacterial outer membrane biogenesis; LPS lipid A biosynthesis. Its function is as follows. Catalyzes the last two sequential reactions in the de novo biosynthetic pathway for UDP-N-acetylglucosamine (UDP-GlcNAc). The C-terminal domain catalyzes the transfer of acetyl group from acetyl coenzyme A to glucosamine-1-phosphate (GlcN-1-P) to produce N-acetylglucosamine-1-phosphate (GlcNAc-1-P), which is converted into UDP-GlcNAc by the transfer of uridine 5-monophosphate (from uridine 5-triphosphate), a reaction catalyzed by the N-terminal domain. The polypeptide is Bifunctional protein GlmU (Yersinia enterocolitica serotype O:8 / biotype 1B (strain NCTC 13174 / 8081)).